Reading from the N-terminus, the 123-residue chain is Large ribosomal subunit protein bL12 (123 aa).

It belongs to the bacterial ribosomal protein bL12 family. Homodimer. Part of the ribosomal stalk of the 50S ribosomal subunit. Forms a multimeric L10(L12)X complex, where L10 forms an elongated spine to which 2 to 4 L12 dimers bind in a sequential fashion. Binds GTP-bound translation factors.

Forms part of the ribosomal stalk which helps the ribosome interact with GTP-bound translation factors. Is thus essential for accurate translation. This chain is Large ribosomal subunit protein bL12, found in Finegoldia magna (strain ATCC 29328 / DSM 20472 / WAL 2508) (Peptostreptococcus magnus).